Reading from the N-terminus, the 92-residue chain is Small ribosomal subunit protein uS19 (92 aa).

This sequence belongs to the universal ribosomal protein uS19 family.

In terms of biological role, protein S19 forms a complex with S13 that binds strongly to the 16S ribosomal RNA. This is Small ribosomal subunit protein uS19 from Rickettsia canadensis (strain McKiel).